The sequence spans 500 residues: ACT domain-containing protein ACR2 (500 aa).

4 ACT domains span residues 39 to 121 (VVKV…EANN), 136 to 213 (AIEM…ADPA), 298 to 373 (IVTV…RVCE), and 376 to 459 (KLEL…TVGS). A disordered region spans residues 450 to 478 (EDTKIDTVGSDEPTASASATPQRQPQPHR). Residues 462–474 (PTASASATPQRQP) are compositionally biased toward polar residues.

In terms of biological role, may bind amino acids. The sequence is that of ACT domain-containing protein ACR2 from Arabidopsis thaliana (Mouse-ear cress).